The following is a 504-amino-acid chain: Glycerol kinase (504 aa).

Residue T12 participates in ADP binding. 3 residues coordinate ATP: T12, T13, and S14. A sn-glycerol 3-phosphate-binding site is contributed by T12. R16 is a binding site for ADP. Residues R82, E83, Y134, and D246 each contribute to the sn-glycerol 3-phosphate site. Glycerol contacts are provided by R82, E83, Y134, D246, and Q247. T268 and G312 together coordinate ADP. ATP is bound by residues T268, G312, Q316, and G413. Positions 413 and 417 each coordinate ADP.

It belongs to the FGGY kinase family.

The catalysed reaction is glycerol + ATP = sn-glycerol 3-phosphate + ADP + H(+). Its pathway is polyol metabolism; glycerol degradation via glycerol kinase pathway; sn-glycerol 3-phosphate from glycerol: step 1/1. Its activity is regulated as follows. Inhibited by fructose 1,6-bisphosphate (FBP). Functionally, key enzyme in the regulation of glycerol uptake and metabolism. Catalyzes the phosphorylation of glycerol to yield sn-glycerol 3-phosphate. The protein is Glycerol kinase of Renibacterium salmoninarum (strain ATCC 33209 / DSM 20767 / JCM 11484 / NBRC 15589 / NCIMB 2235).